Reading from the N-terminus, the 866-residue chain is MSSPARSPSVGGATPKQGARTPTRGIASQDVETPMRMGPGRAVRPSDNISLPPTSPGNISLPATSPARGLGANMSEIDLSSPLNYGTPSSMGSIRTPRSGIRGTPLRARPDIRTDKRIRQVAIGGGSGLEPIPEKGSETTDPVSESSQAPQLVVWGTNVVVSQCKSKFKSFIMRFIDPSAEQDEISENIDVNQPLYLQKLEEIHTLEEPYLNLNCAHLKTFDQDLYRQLICYPQEVIPGFDMAINEMFFERYPAALLEHQIQVRPFNADKTRNMRSLNPEDMDQLISISGMVIRSSNVIPEMREAFFSCNICSFSTTVEVDRGRINQPTLCTNCNTNHCFRLIHNRSEFTDKQLVKLQESPDDMAAGQTPHNVLLYAHNDLVDKVQPGDRVTVTGIYRATPLKTGGLSSSVKSVYKTHVDVVHFRKVDNKRLYEDEEGKDHIFPPERVELLQLLAKKPDIYDRLARAIAPSIYENDDIKKGILLQLFGGTKKKHATLGRQNFRSEIHLLLCGDPGTSKSQMLQYVFNLVPRSQYTSGRGSSAVGLTAYVTKDPETRQLVLQTGALVLADNGVCCIDEFDKMNDSTRSVLHEVMEQQTLSIAKAGIICQLNARTSILAAANPAESQWNKRKNIIDNVQLPHTLLSRFDLIFLVLDPQDEIFDKRLASHLVSLYYVTRHEEEDTMFDMSVLRDYIAYAREHLSPTLSDEAQQRLIQAYVDMRKVGAGRGQISAYPRQLESLIRLSEAHAKVRLSNQVELLDVEEAWRLHREALKQSATDPLSGKIDVGILTTGLSTAARKKRADLVAAIKENLKKKGKVLTVPYQKLFSDIKEGSQIMITREQFEDALKEVQDEGAIVVMGKNTIRIC.

Disordered regions lie at residues 1-67 (MSSP…TSPA), 81-107 (SPLN…TPLR), and 124-145 (GGGS…PVSE). 2 stretches are compositionally biased toward polar residues: residues 47–63 (DNIS…SLPA) and 81–93 (SPLN…SMGS). Phosphoserine is present on residues Ser-55 and Ser-81. A Phosphothreonine modification is found at Thr-87. One can recognise an MCM domain in the interval 460–669 (IYDRLARAIA…FDKRLASHLV (210 aa)). 512 to 519 (GDPGTSKS) contacts ATP. The Arginine finger signature appears at 644 to 647 (SRFD).

It belongs to the MCM family. In terms of assembly, component of the Mcm2-7 complex. The complex forms a toroidal hexameric ring with the proposed subunit order Mcm2-Mcm6-Mcm4-Mcm7-Mcm3-Mcm5. Phosphorylated by the catalytic component of the Dbf4-dependent kinase (DDK) complex Cdc7.

Its subcellular location is the nucleus. It catalyses the reaction ATP + H2O = ADP + phosphate + H(+). Acts as a component of the Mcm2-7 complex (Mcm complex) which is the putative replicative helicase essential for 'once per cell cycle' DNA replication initiation and elongation in eukaryotic cells. The active ATPase sites in the Mcm2-7 ring are formed through the interaction surfaces of two neighboring subunits such that a critical structure of a conserved arginine finger motif is provided in trans relative to the ATP-binding site of the Walker A box of the adjacent subunit. The six ATPase active sites, however, are likely to contribute differentially to the complex helicase activity. Required for DNA replication and cell proliferation. Essential role in mitotic DNA replication but not in endoreplication. The protein is DNA replication licensing factor MCM4 (dpa) of Drosophila melanogaster (Fruit fly).